Reading from the N-terminus, the 215-residue chain is Cytochrome b6 (215 aa).

Residues 32-52 traverse the membrane as a helical segment; sequence IFYCLGGITLTCFLIQVATGF. Cys35 serves as a coordination point for heme c. 2 residues coordinate heme b: His86 and His100. 3 helical membrane-spanning segments follow: residues 90 to 110, 116 to 136, and 186 to 206; these read ASMMVLMMILHVFRVYLTGGF, LTWVTGVILAVLTVSFGVTGY, and LHTFVLPLLTAVFMLMHFLMI. 2 residues coordinate heme b: His187 and His202.

This sequence belongs to the cytochrome b family. PetB subfamily. The 4 large subunits of the cytochrome b6-f complex are cytochrome b6, subunit IV (17 kDa polypeptide, PetD), cytochrome f and the Rieske protein, while the 4 small subunits are PetG, PetL, PetM and PetN. The complex functions as a dimer. Requires heme b as cofactor. Heme c is required as a cofactor.

It is found in the plastid. It localises to the chloroplast thylakoid membrane. Functionally, component of the cytochrome b6-f complex, which mediates electron transfer between photosystem II (PSII) and photosystem I (PSI), cyclic electron flow around PSI, and state transitions. This chain is Cytochrome b6, found in Spirogyra maxima (Green alga).